The primary structure comprises 185 residues: Elongation factor P (185 aa).

It belongs to the elongation factor P family.

It is found in the cytoplasm. It participates in protein biosynthesis; polypeptide chain elongation. Functionally, involved in peptide bond synthesis. Stimulates efficient translation and peptide-bond synthesis on native or reconstituted 70S ribosomes in vitro. Probably functions indirectly by altering the affinity of the ribosome for aminoacyl-tRNA, thus increasing their reactivity as acceptors for peptidyl transferase. The polypeptide is Elongation factor P (Bacillus cereus (strain 03BB102)).